We begin with the raw amino-acid sequence, 779 residues long: Nucleolar complex protein 3 homolog (779 aa).

Disordered stretches follow at residues 1–20 (MGFASASREEKLKMMKTNKT) and 100–189 (NAKR…SHLS). Over residues 114–124 (DSDEDEDEDDV) the composition is skewed to acidic residues. A compositionally biased stretch (basic and acidic residues) spans 136 to 160 (EEGHEELLPIKLKDGTLIRPTREKE). Residues 161 to 178 (VEEQEEEEKSDIDEGEED) show a composition bias toward acidic residues. The stretch at 434–474 (AKKYQIKKERASKTAKKYKKQLARLEADLLEVEAEESLTKK) forms a coiled coil.

The protein belongs to the CBF/MAK21 family.

Its subcellular location is the nucleus. The protein localises to the nucleolus. The polypeptide is Nucleolar complex protein 3 homolog (Caenorhabditis briggsae).